We begin with the raw amino-acid sequence, 233 residues long: Nickel import system ATP-binding protein NikE (233 aa).

One can recognise an ABC transporter domain in the interval 2 to 228; it reads IELKHVTFGY…DRHPYTKELV (227 aa). Residue 35–42 participates in ATP binding; sequence GESGCGKS.

Belongs to the ABC transporter superfamily. The complex is composed of two ATP-binding proteins (NikD and NikE), two transmembrane proteins (NikB and NikC) and a solute-binding protein (NikA).

It localises to the cell membrane. The enzyme catalyses Ni(2+)(out) + ATP + H2O = Ni(2+)(in) + ADP + phosphate + H(+). Functionally, part of the ABC transporter complex NikABCDE (Opp2) involved in nickel import. Probably responsible for energy coupling to the transport system. The sequence is that of Nickel import system ATP-binding protein NikE from Staphylococcus aureus (strain MSSA476).